We begin with the raw amino-acid sequence, 577 residues long: Glycine--tRNA ligase (577 aa).

Substrate-binding residues include Arg-96 and Glu-161. Residues 193–195 (RNE), 203–208 (IRLREF), 319–320 (EI), and 434–437 (GIDR) each bind ATP. Position 208 to 212 (208 to 212 (FSQAE)) interacts with substrate. 430–434 (EPSFG) lines the substrate pocket.

It belongs to the class-II aminoacyl-tRNA synthetase family.

It localises to the cytoplasm. The catalysed reaction is tRNA(Gly) + glycine + ATP = glycyl-tRNA(Gly) + AMP + diphosphate. In terms of biological role, catalyzes the attachment of glycine to tRNA(Gly). The sequence is that of Glycine--tRNA ligase from Methanothrix thermoacetophila (strain DSM 6194 / JCM 14653 / NBRC 101360 / PT) (Methanosaeta thermophila).